Reading from the N-terminus, the 20-residue chain is Antiviral protein Y3 (20 aa).

In Pleurotus citrinopileatus (Golden oyster mushroom), this protein is Antiviral protein Y3.